The chain runs to 908 residues: Translation initiation factor IF-2 (908 aa).

2 disordered regions span residues 123-154 and 212-278; these read EEPP…EELK and KKEP…VSEK. Positions 407-577 constitute a tr-type G domain; it reads ERAPIVTIMG…LFEAELLELK (171 aa). Residues 416–423 are G1; that stretch reads GHVDHGKT. 416–423 lines the GTP pocket; the sequence is GHVDHGKT. The segment at 441–445 is G2; the sequence is GITQH. The G3 stretch occupies residues 463 to 466; it reads DTPG. GTP is bound by residues 463 to 467 and 517 to 520; these read DTPGH and NKMD. The segment at 517–520 is G4; that stretch reads NKMD. The interval 553–555 is G5; that stretch reads SAI.

Belongs to the TRAFAC class translation factor GTPase superfamily. Classic translation factor GTPase family. IF-2 subfamily.

It is found in the cytoplasm. One of the essential components for the initiation of protein synthesis. Protects formylmethionyl-tRNA from spontaneous hydrolysis and promotes its binding to the 30S ribosomal subunits. Also involved in the hydrolysis of GTP during the formation of the 70S ribosomal complex. The protein is Translation initiation factor IF-2 of Amoebophilus asiaticus (strain 5a2).